We begin with the raw amino-acid sequence, 302 residues long: MNLQVEVGGLKLKNPVMTASGTFGFGREYGEYIDLNQLGAIVVKGLTVNPKEGNPPPRVYETPCGMLNSVGLQNPGINAFIEKELPFLRDYDVAVIVNIAGETIEEFAYMAKKLDIDGVDGIEINVSCPNVKKGGMAFGINPEDIFNITKEVKKVTQKTVIVKLTPNVGDIGVCAKAAEDGGADAVSLINTIAGMAINIDTRTPVFKNVIAGLSGPAIKPIALRMVYEAARAVKIPVIGMGGISSFKDALEFMIAGAKAVAIGTCNFVNPNCTIEVIEGIKQYMVLNNIEDINEIIGSLKVD.

Residues S20 and 44 to 45 contribute to the FMN site; that span reads KG. Residues K44 and 68–72 contribute to the substrate site; that span reads NSVGL. The FMN site is built by N98 and N125. A substrate-binding site is contributed by N125. C128 acts as the Nucleophile in catalysis. Positions 163 and 189 each coordinate FMN. 190–191 contributes to the substrate binding site; the sequence is NT. FMN-binding positions include G215, 241 to 242, and 263 to 264; these read GG and GT.

It belongs to the dihydroorotate dehydrogenase family. Type 1 subfamily. As to quaternary structure, heterotetramer of 2 PyrK and 2 PyrD type B subunits. FMN is required as a cofactor.

Its subcellular location is the cytoplasm. The enzyme catalyses (S)-dihydroorotate + NAD(+) = orotate + NADH + H(+). Its pathway is pyrimidine metabolism; UMP biosynthesis via de novo pathway; orotate from (S)-dihydroorotate (NAD(+) route): step 1/1. Functionally, catalyzes the conversion of dihydroorotate to orotate with NAD(+) as electron acceptor. The polypeptide is Dihydroorotate dehydrogenase B (NAD(+)), catalytic subunit (pyrD) (Thermoanaerobacter pseudethanolicus (strain ATCC 33223 / 39E) (Clostridium thermohydrosulfuricum)).